The primary structure comprises 366 residues: MAQRVQEEDEQMMSTDDLIQAQIKLYHHCFAFIKSTALWAAIDLRIADVIHRNGGAATLSDLALNVGLHPTKLSHLRRLMRVLTVTGIFAVEDRNGEAMYTLTRVSRLLLNSDGEGTHALSQMARVLANPLAVISHFSIHEWFTTEKATTMTPFEVAHGCTRWEMIANDAKDGSVFNAGMVEDSRVAMDIILKESCGIFQGISSLIDVGGGHGAAAAAIATAFPNIKCTVLDLPHIVAEAPATHSNIQFIGGDLFKFIPAADVVLLKCLLHCWQDDDCVKILRLCKEAIPARDAGGKVIIIEVVVGIGSEEIVPKEMQLLFDVFMMYIDGIEREEYEWKKIFLEAGFSDYKITPVLGARSIIEVYP.

S-adenosyl-L-homocysteine contacts are provided by glycine 209, aspartate 232, aspartate 253, and lysine 267. The Proton acceptor role is filled by histidine 271. Active-site residues include glutamate 302 and glutamate 332.

This sequence belongs to the class I-like SAM-binding methyltransferase superfamily. Cation-independent O-methyltransferase family. Homodimer. In terms of tissue distribution, expressed in roots, leaves, stems and flowers.

The protein resides in the cytoplasm. It catalyses the reaction N-acetylserotonin + S-adenosyl-L-methionine = melatonin + S-adenosyl-L-homocysteine + H(+). The protein operates within aromatic compound metabolism; melatonin biosynthesis; melatonin from serotonin: step 1/2. Functionally, methyltransferase which catalyzes the transfer of a methyl group onto N-acetylserotonin, producing melatonin (N-acetyl-5-methoxytryptamine). In Oryza sativa subsp. japonica (Rice), this protein is Acetylserotonin O-methyltransferase 2.